The sequence spans 146 residues: MNIIAQLEAEQCAKIAAKRQLPAFQPGDTVRVMVRVTEGTRTRVQAYEGVCIARSGGGLNETFTVRKISYGEGVERVFPVYSPLIEGVELVRRGKVRRAKLYYLRNLRGKAARITEKKDQRKKSAKIVEKEQEALVRVEAPAHATE.

This sequence belongs to the bacterial ribosomal protein bL19 family.

In terms of biological role, this protein is located at the 30S-50S ribosomal subunit interface and may play a role in the structure and function of the aminoacyl-tRNA binding site. This is Large ribosomal subunit protein bL19 from Bartonella henselae (strain ATCC 49882 / DSM 28221 / CCUG 30454 / Houston 1) (Rochalimaea henselae).